A 382-amino-acid chain; its full sequence is uncharacterized protein (382 aa).

Helical transmembrane passes span 14-34 (GLLL…LWLA), 45-65 (VVSS…GYVI), 79-99 (FIFA…SWLA), 102-122 (FVAG…LMCS), 131-151 (LLAA…LLVS), 157-177 (LMSV…PLLF), 204-224 (LGVN…GLMP), 235-255 (ASIG…QWPI), 270-290 (VQVF…AMAP), 291-311 (ALFI…AWAC), 325-345 (ALLL…AMLM), and 348-368 (FSDN…LLML).

Belongs to the major facilitator superfamily. YcaD (TC 2.A.1.26) family.

It localises to the cell inner membrane. This is an uncharacterized protein from Shigella dysenteriae serotype 1 (strain Sd197).